The chain runs to 1381 residues: Hepatocyte growth factor receptor (1381 aa).

Positions 1–24 (MKAPTVLAPGILVLLFTLVQKSNG) are cleaved as a signal peptide. The Extracellular portion of the chain corresponds to 25–933 (ECREALAKSE…VIVQSDQSFT (909 aa)). In terms of domain architecture, Sema spans 27 to 516 (REALAKSEMN…TGKKITRIPL (490 aa)). Residues N45, N100, and N106 are each glycosylated (N-linked (GlcNAc...) asparagine). 4 disulfide bridges follow: C95–C101, C98–C160, C133–C141, and C173–C176. N203 and N359 each carry an N-linked (GlcNAc...) asparagine glycan. 2 disulfides stabilise this stretch: C299–C364 and C386–C398. Residues N400 and N406 are each glycosylated (N-linked (GlcNAc...) asparagine). 4 disulfide bridges follow: C521/C539, C527/C562, C530/C546, and C542/C552. N554 is a glycosylation site (N-linked (GlcNAc...) asparagine). IPT/TIG domains follow at residues 564–656 (PTVY…FSYV), 658–740 (PIIT…FSYR), and 743–837 (PIVY…LIYV). T583 carries O-linked (Man) threonine glycosylation. 2 N-linked (GlcNAc...) asparagine glycosylation sites follow: N608 and N636. Residues T677 and T762 are each glycosylated (O-linked (Man) threonine). N-linked (GlcNAc...) asparagine glycosylation is found at N786 and N880. Residues 934 to 956 (GVIVGVVAISIILLLLLGLFLWL) form a helical membrane-spanning segment. Over 957-1381 (KKKKQIKDLG…QDDLDGEVDT (425 aa)) the chain is Cytoplasmic. S967 is subject to Phosphoserine. T978 carries the phosphothreonine modification. A phosphoserine mark is found at S991, S998, and S1001. The residue at position 1004 (Y1004) is a Phosphotyrosine. One can recognise a Protein kinase domain in the interval 1079–1346 (VHFNEVIGRG…RISAIFSTFI (268 aa)). Residues 1085–1093 (IGRGHFGCV) and K1111 each bind ATP. Residue D1205 is the Proton acceptor of the active site. Residues 1213-1381 (LDEKFTVKVA…QDDLDGEVDT (169 aa)) are interaction with RANBP9. A Phosphotyrosine modification is found at Y1231. A phosphotyrosine; by autocatalysis mark is found at Y1235 and Y1236. T1290 is subject to Phosphothreonine. The interval 1321–1360 (WHPKAEMRPSFSELVSRISAIFSTFIGEHYVHVNATYVNV) is interaction with MUC20. Phosphotyrosine; by autocatalysis is present on residues Y1350 and Y1357. Y1366 carries the post-translational modification Phosphotyrosine.

This sequence belongs to the protein kinase superfamily. Tyr protein kinase family. As to quaternary structure, heterodimer made of an alpha chain (50 kDa) and a beta chain (145 kDa) which are disulfide linked. Binds PLXNB1. Interacts when phosphorylated with downstream effectors including STAT3, PIK3R1, SRC, PCLG1, GRB2 and GAB1. Interacts with SPSB1, SPSB2 and SPSB4. Interacts with INPP5D/SHIP1. When phosphorylated at Tyr-1357, interacts with INPPL1/SHIP2. Interacts with RANBP9 and RANBP10, as well as SPSB1, SPSB2, SPSB3 and SPSB4. SPSB1 binding occurs in the presence and in the absence of HGF, however HGF treatment has a positive effect on this interaction. Interacts with MUC20; prevents interaction with GRB2 and suppresses hepatocyte growth factor-induced cell proliferation. Interacts with GRB10. Interacts with PTPN1 and PTPN2. Interacts with HSP90AA1 and HSP90AB1; the interaction suppresses MET kinase activity. Interacts with tensin TNS3. Interacts (when phosphorylated) with tensin TNS4 (via SH2 domain); the interaction increases MET protein stability by inhibiting MET endocytosis and subsequent lysosomal degradation. Autophosphorylated in response to ligand binding on Tyr-1235 and Tyr-1236 in the kinase domain leading to further phosphorylation of Tyr-1350 and Tyr-1357 in the C-terminal multifunctional docking site. Dephosphorylated by PTPRJ at Tyr-1350 and Tyr-1366. Dephosphorylated by PTPN1 and PTPN2. In terms of processing, ubiquitinated. Ubiquitination by CBL regulates the receptor stability and activity through proteasomal degradation. Post-translationally, O-mannosylation of IPT/TIG domains by TMEM260 is required for protein maturation. O-mannosylated residues are composed of single mannose glycans that are not elongated or modified.

The protein resides in the membrane. The enzyme catalyses L-tyrosyl-[protein] + ATP = O-phospho-L-tyrosyl-[protein] + ADP + H(+). With respect to regulation, in its inactive state, the C-terminal tail interacts with the catalytic domain and inhibits the kinase activity. Upon ligand binding, the C-terminal tail is displaced and becomes phosphorylated, thus increasing the kinase activity. Its function is as follows. Receptor tyrosine kinase that transduces signals from the extracellular matrix into the cytoplasm by binding to hepatocyte growth factor/HGF ligand. Regulates many physiological processes including proliferation, scattering, morphogenesis and survival. Ligand binding at the cell surface induces autophosphorylation of MET on its intracellular domain that provides docking sites for downstream signaling molecules. Following activation by ligand, interacts with the PI3-kinase subunit PIK3R1, PLCG1, SRC, GRB2, STAT3 or the adapter GAB1. Recruitment of these downstream effectors by MET leads to the activation of several signaling cascades including the RAS-ERK, PI3 kinase-AKT, or PLCgamma-PKC. The RAS-ERK activation is associated with the morphogenetic effects while PI3K/AKT coordinates prosurvival effects. During embryonic development, MET signaling plays a role in gastrulation, development and migration of muscles and neuronal precursors, angiogenesis and kidney formation. In adults, participates in wound healing as well as organ regeneration and tissue remodeling. Also promotes differentiation and proliferation of hematopoietic cells. The sequence is that of Hepatocyte growth factor receptor (MET) from Dasypus novemcinctus (Nine-banded armadillo).